The primary structure comprises 652 residues: Serine/threonine-protein kinase ssp1 (652 aa).

Position 58 is a phosphotyrosine (Tyr58). Ser59 carries the phosphoserine modification. Tyr63 bears the Phosphotyrosine mark. Positions 135-409 (YEIIKELGRG…LVEVKLHPWT (275 aa)) constitute a Protein kinase domain. Residues 141-149 (LGRGMHGKV) and Lys164 each bind ATP. The active-site Proton acceptor is Asp267. Disordered stretches follow at residues 467–491 (DSSSSVPSDSSICRPESSGNSSIGL) and 506–529 (NESQKDRERKQVHPVEMGRNSSEK). The span at 508–518 (SQKDRERKQVH) shows a compositional bias: basic and acidic residues.

This sequence belongs to the protein kinase superfamily. Ser/Thr protein kinase family.

It localises to the cytoplasm. It carries out the reaction L-seryl-[protein] + ATP = O-phospho-L-seryl-[protein] + ADP + H(+). The catalysed reaction is L-threonyl-[protein] + ATP = O-phospho-L-threonyl-[protein] + ADP + H(+). Functionally, involved in actin localization and thus in polarized cell growth. The sequence is that of Serine/threonine-protein kinase ssp1 (ssp1) from Schizosaccharomyces pombe (strain 972 / ATCC 24843) (Fission yeast).